A 490-amino-acid polypeptide reads, in one-letter code: Cytochrome P450 90D2 (490 aa).

Residues Ala4–Leu24 traverse the membrane as a helical segment. Cys437 contacts heme.

It belongs to the cytochrome P450 family. It depends on heme as a cofactor.

It localises to the membrane. It carries out the reaction 6-deoxoteasterone + reduced [NADPH--hemoprotein reductase] + O2 = 3-dehydro-6-deoxoteasterone + oxidized [NADPH--hemoprotein reductase] + 2 H2O + H(+). It functions in the pathway plant hormone biosynthesis; brassinosteroid biosynthesis. Its function is as follows. Catalyzes the C6-oxidation step in brassinosteroids biosynthesis. May convert 6-deoxoteasterone (6-deoxoTE) to 3-dehydro-6-deoxoteasterone (6-deoxo3DT, 6-deoxo3DHT), and teasterone (TE) to 3-dehydroteasterone (3DT, 3-DHT). Involved in the elongation of leaf sheaths and stems. This Oryza sativa subsp. indica (Rice) protein is Cytochrome P450 90D2.